We begin with the raw amino-acid sequence, 447 residues long: Na(+)-translocating NADH-quinone reductase subunit A (447 aa).

This sequence belongs to the NqrA family. Composed of six subunits; NqrA, NqrB, NqrC, NqrD, NqrE and NqrF.

The enzyme catalyses a ubiquinone + n Na(+)(in) + NADH + H(+) = a ubiquinol + n Na(+)(out) + NAD(+). Functionally, NQR complex catalyzes the reduction of ubiquinone-1 to ubiquinol by two successive reactions, coupled with the transport of Na(+) ions from the cytoplasm to the periplasm. NqrA to NqrE are probably involved in the second step, the conversion of ubisemiquinone to ubiquinol. The sequence is that of Na(+)-translocating NADH-quinone reductase subunit A from Neisseria gonorrhoeae (strain ATCC 700825 / FA 1090).